We begin with the raw amino-acid sequence, 262 residues long: uncharacterized protein (262 aa).

The signal sequence occupies residues 1-22; sequence MMNNSITLLLALLVGLVGFAFT.

This sequence belongs to the IIV-6 117L family.

This is an uncharacterized protein from Aedes vexans (Inland floodwater mosquito).